We begin with the raw amino-acid sequence, 90 residues long: Small ribosomal subunit protein uS15c (90 aa).

This sequence belongs to the universal ribosomal protein uS15 family. As to quaternary structure, part of the 30S ribosomal subunit.

The protein resides in the plastid. It is found in the chloroplast. The chain is Small ribosomal subunit protein uS15c (rps15) from Populus alba (White poplar).